Reading from the N-terminus, the 471-residue chain is Glutamate--tRNA ligase (471 aa).

The short motif at 10 to 20 is the 'HIGH' region element; it reads PSPTGYLHIGG. Residues C107, C109, C134, and E136 each contribute to the Zn(2+) site. Positions 244–248 match the 'KMSKS' region motif; that stretch reads RLSKR. Residue K247 coordinates ATP.

It belongs to the class-I aminoacyl-tRNA synthetase family. Glutamate--tRNA ligase type 1 subfamily. As to quaternary structure, monomer. It depends on Zn(2+) as a cofactor.

It is found in the cytoplasm. The enzyme catalyses tRNA(Glu) + L-glutamate + ATP = L-glutamyl-tRNA(Glu) + AMP + diphosphate. Its function is as follows. Catalyzes the attachment of glutamate to tRNA(Glu) in a two-step reaction: glutamate is first activated by ATP to form Glu-AMP and then transferred to the acceptor end of tRNA(Glu). In Anaeromyxobacter sp. (strain Fw109-5), this protein is Glutamate--tRNA ligase.